A 239-amino-acid chain; its full sequence is MVKDFSAEEIIQYISDAKKSTPLKVYVNGVLGQVTFPDSFKVFGSENSKVIFCEASDWEDFYNDNKNYIEEVEIEMDRRNSAIPLKDLRNTNARIEPGAFIREHAVIEDGAVVMMGATINIGAVVGEGTMIDMNATLGGRATTGKNVHVGAGAVLAGVIEPPSASPVVIEDNVLIGANAVILEGVRVGEGAIVAAGAIVTQDVPAGAVVAGTPAKVIKQTSEVEDSKREIVSALRKLND.

The protein belongs to the transferase hexapeptide repeat family. DapH subfamily.

It carries out the reaction (S)-2,3,4,5-tetrahydrodipicolinate + acetyl-CoA + H2O = L-2-acetamido-6-oxoheptanedioate + CoA. The protein operates within amino-acid biosynthesis; L-lysine biosynthesis via DAP pathway; LL-2,6-diaminopimelate from (S)-tetrahydrodipicolinate (acetylase route): step 1/3. Catalyzes the transfer of an acetyl group from acetyl-CoA to tetrahydrodipicolinate. This is 2,3,4,5-tetrahydropyridine-2,6-dicarboxylate N-acetyltransferase from Staphylococcus carnosus (strain TM300).